The following is a 63-amino-acid chain: Hyphancin-3F (63 aa).

The first 22 residues, 1-22, serve as a signal peptide directing secretion; it reads MNFSRILFFVFACFVALASVSA. A propeptide spans 23–26 (removed by a dipeptidylpeptidase); it reads APEP. Leu-61 carries the leucine amide modification.

The protein belongs to the cecropin family.

It localises to the secreted. Functionally, has antibacterial activity. The protein is Hyphancin-3F of Hyphantria cunea (Fall webworm moth).